The sequence spans 539 residues: Netrin-G1 (539 aa).

The N-terminal stretch at 1-18 (MYLSRFLSIHALWVTVSS) is a signal peptide. 3 disulfides stabilise this stretch: cysteine 33–cysteine 50, cysteine 72–cysteine 92, and cysteine 80–cysteine 88. Residues 46-296 (DYTACQPEST…AISDIKVRGR (251 aa)) enclose the Laminin N-terminal domain. Residues 80–91 (CAMGNPYMCNNE) are NGL discriminant loop I. Asparagine 133 carries N-linked (GlcNAc...) asparagine glycosylation. Cysteine 182 and cysteine 206 are joined by a disulfide. Residues 208–214 (EEYSTGY) are NGL discriminant loop II. Residues 273–275 (EIF) form an NGL discriminant loop III region. 13 disulfides stabilise this stretch: cysteine 297–cysteine 306, cysteine 299–cysteine 315, cysteine 317–cysteine 326, cysteine 329–cysteine 354, cysteine 364–cysteine 373, cysteine 366–cysteine 384, cysteine 387–cysteine 396, cysteine 399–cysteine 417, cysteine 420–cysteine 432, cysteine 422–cysteine 438, cysteine 440–cysteine 449, cysteine 452–cysteine 462, and cysteine 488–cysteine 497. Laminin EGF-like domains follow at residues 297 to 356 (CKCN…TCIP), 364 to 419 (CECF…VCIE), and 420 to 469 (CYCN…VCDN). N-linked (GlcNAc...) asparagine glycosylation occurs at asparagine 320. N-linked (GlcNAc...) asparagine glycosylation is present at asparagine 406. An N-linked (GlcNAc...) asparagine glycan is attached at asparagine 433. The GPI-anchor amidated serine moiety is linked to residue serine 510. A propeptide spans 511–539 (ESGQGAPPRGSPALLLLTMLLGTAGPLVF) (removed in mature form).

Post-translationally, N-glycosylated. In terms of tissue distribution, expression is restricted primarily to neurons of the CNS, particularly in the dorsal thalamus, olfactory bulb and inferior colliculus. Isoform 1A and isoform 1D are the major products in adult brain.

The protein localises to the cell membrane. Its function is as follows. Involved in controlling patterning and neuronal circuit formation at the laminar, cellular, subcellular and synaptic levels. Promotes neurite outgrowth of both axons and dendrites. The sequence is that of Netrin-G1 (Ntng1) from Mus musculus (Mouse).